A 709-amino-acid polypeptide reads, in one-letter code: Transcriptional factor SWI5 (709 aa).

Phosphoserine is present on serine 225. The segment covering leucine 245–arginine 264 has biased composition (polar residues). A disordered region spans residues leucine 245–asparagine 267. Residues serine 278 and serine 300 each carry the phosphoserine modification. Phosphothreonine is present on threonine 339. Serine 376 bears the Phosphoserine mark. Positions leucine 443–serine 483 are disordered. The span at asparagine 471 to glutamate 480 shows a compositional bias: acidic residues. A phosphoserine mark is found at serine 488, serine 492, and serine 505. Position 522 is a phosphoserine; by CDC28 (serine 522). C2H2-type zinc fingers lie at residues phenylalanine 550–histidine 574, tyrosine 580–histidine 604, and tyrosine 609–cysteine 632. The short motif at glycine 635–serine 659 is the Nuclear localization signal element. Residues lysine 644 to glutamine 677 are disordered. Serine 646 carries the phosphoserine; by CDC28 modification. Positions proline 647–serine 659 form a DNA-binding region, a.T hook. Position 664 is a phosphoserine; by CDC28 (serine 664).

Post-translationally, cell cycle-dependent phosphorylation of three serine residues prevents SWI5 from entering the nucleus, and it accumulates in the cytoplasm. As a consequence of CDC28 kinase inactivation at the end of anaphase, the three serine residues are dephosphorylated and SWI5 enters the nucleus to activate transcription. It is then rapidly degraded. Threonine phosphorylation also seems to occur. In terms of processing, phosphorylated by PHO85.

The protein localises to the nucleus. The protein resides in the cytoplasm. Its function is as follows. Determines the mother-cell-specific transcription of the HO endonuclease gene that is responsible for the initiation of mating-type switching in yeast. Recognizes a specific sequence in the promoter of the HO gene. Activates EGT2 transcription in a concentration-dependent manner. Synthesized during G2 and early mitosis. The sequence is that of Transcriptional factor SWI5 (SWI5) from Saccharomyces cerevisiae (strain ATCC 204508 / S288c) (Baker's yeast).